The primary structure comprises 916 residues: DNA ligase 1 (916 aa).

Polar residues predominate over residues 1–10; sequence MQRSIMSFFQ. Positions 1 to 197 are disordered; the sequence is MQRSIMSFFQ…SPESVTLTKT (197 aa). Positions 13 to 43 are enriched in basic and acidic residues; the sequence is KEGKAKKPEKETPSSIREKEPPPKVALKERN. Ser49, Ser51, and Ser65 each carry phosphoserine. Thr77 carries the post-translational modification Phosphothreonine. The span at 99–111 shows a compositional bias: polar residues; sequence PENSPVFNCSSPM. Positions 119 to 129 are enriched in basic residues; the sequence is PKRRTARKQLP. Position 144 is an N6-acetyllysine (Lys144). The segment covering 153–177 has biased composition (basic and acidic residues); it reads KEEETPKESLAEAEDIKQKEEKEGD. The span at 185–197 shows a compositional bias: polar residues; it reads PTKSPESVTLTKT. Position 193 is a phosphothreonine (Thr193). Lys225 bears the N6-acetyllysine mark. Residues Ser228 and Ser229 each carry the phosphoserine modification. At Thr232 the chain carries Phosphothreonine. The interval 236 to 266 is disordered; sequence PAVKTEVKQEESGTLRKEETKGTLDPANYNP. The span at 238–257 shows a compositional bias: basic and acidic residues; the sequence is VKTEVKQEESGTLRKEETKG. The interval 447 to 456 is interaction with target DNA; the sequence is RLRLGLAEQS. Position 564 (Glu564) interacts with ATP. The active-site N6-AMP-lysine intermediate is Lys566. Positions 571 and 619 each coordinate ATP. Residue Glu619 coordinates Mg(2+). Residues 640-642 form an interaction with target DNA region; that stretch reads KRK. Glu718 is a Mg(2+) binding site. Residues Lys723 and Lys742 each coordinate ATP. Thr796 carries the phosphothreonine modification. 4 positions are modified to phosphoserine: Ser799, Ser906, Ser907, and Ser911. The disordered stretch occupies residues 879–916; sequence DKQPEQATTSNQVASLYRKQSQIQNQQSSDLDSDVEDY. A compositionally biased stretch (polar residues) spans 883-908; sequence EQATTSNQVASLYRKQSQIQNQQSSD.

It belongs to the ATP-dependent DNA ligase family. In terms of assembly, interacts with PCNA. Interacts with POLB. Mg(2+) is required as a cofactor.

Its subcellular location is the nucleus. The enzyme catalyses ATP + (deoxyribonucleotide)n-3'-hydroxyl + 5'-phospho-(deoxyribonucleotide)m = (deoxyribonucleotide)n+m + AMP + diphosphate.. In terms of biological role, DNA ligase that seals nicks in double-stranded during DNA repair. Also involved in DNA replication and DNA recombination. This is DNA ligase 1 (Lig1) from Mus musculus (Mouse).